The primary structure comprises 318 residues: Protein phosphatase 1 regulatory subunit 3C (318 aa).

Positions 84–87 match the PP1-binding motif motif; sequence RVVF. An interaction with EPM2A region spans residues 141-263; that stretch reads PSADYLSFRN…YRIVHVQWKP (123 aa). In terms of domain architecture, CBM21 spans 149–257; it reads RNHFQKNSVC…NNEGQNYRIV (109 aa).

As to quaternary structure, interacts with PPP1CC catalytic subunit of PP1 and associates with glycogen. Forms complexes with glycogen phosphorylase, glycogen synthase and phosphorylase kinase which is necessary for its regulation of PP1 activity. Also interacts with EPM2A/laforin. In terms of processing, ubiquitinated by NHLRC1/malin in a EPM2A/laforin-dependent manner.

Acts as a glycogen-targeting subunit for PP1 and regulates its activity. Activates glycogen synthase, reduces glycogen phosphorylase activity and limits glycogen breakdown. Dramatically increases basal and insulin-stimulated glycogen synthesis upon overexpression in a variety of cell types. The sequence is that of Protein phosphatase 1 regulatory subunit 3C from Bos taurus (Bovine).